Consider the following 608-residue polypeptide: Growth hormone receptor (608 aa).

An N-terminal signal peptide occupies residues 1-16 (MDLRHLLFTLALVCAN). Over 17 to 237 (DSLSASDDLL…EFVHCAEEIE (221 aa)) the chain is Extracellular. Intrachain disulfides connect C34/C44 and C72/C83. N86 carries an N-linked (GlcNAc...) asparagine glycan. The cysteines at positions 97 and 111 are disulfide-linked. Positions 122–226 (PPVHLNWTLL…ILYVSFTQAG (105 aa)) constitute a Fibronectin type-III domain. N-linked (GlcNAc...) asparagine glycosylation is found at N127, N132, and N171. Positions 211 to 215 (FGEFS) match the WSXWS motif motif. A helical membrane pass occupies residues 238–261 (FPWFLVVVFGVCGLAVTAILILLS). Residues 262–608 (KQPRLKMLIF…STDQLNKIMP (347 aa)) lie on the Cytoplasmic side of the membrane. A required for JAK2 binding region spans residues 267–352 (KMLIFPPVPV…HLKSHSCLGA (86 aa)). A Box 1 motif motif is present at residues 270-278 (IFPPVPVPK). The short motif at 313–322 (DLWVEFIELD) is the UbE motif element. Composition is skewed to polar residues over residues 413 to 426 (ANTD…STQS) and 438 to 451 (STDS…TQLS). A disordered region spans residues 413–451 (ANTDTQQPHTSTQSESRESWPPFADSTDSANPSVQTQLS).

Belongs to the type I cytokine receptor family. Type 1 subfamily. Post-translationally, on GH binding, proteolytically cleaved, in vitro, to produce GHBP. In terms of tissue distribution, broad specificity.

The protein resides in the cell membrane. The protein localises to the secreted. Functionally, receptor for pituitary gland growth hormone (GH1) involved in regulating postnatal body growth. On ligand binding, couples to the JAK2/STAT5 pathway. The soluble form (GHBP) acts as a reservoir of growth hormone in plasma and may be a modulator/inhibitor of GH signaling. This chain is Growth hormone receptor (GHR), found in Gallus gallus (Chicken).